We begin with the raw amino-acid sequence, 95 residues long: Ferredoxin-like protein FixX (95 aa).

Belongs to the bacterial-type ferredoxin family. FixX subfamily.

In terms of biological role, could be part of an electron transfer system required for anaerobic carnitine reduction. Could be a 3Fe-4S cluster-containing protein. The sequence is that of Ferredoxin-like protein FixX (fixX) from Salmonella typhimurium (strain LT2 / SGSC1412 / ATCC 700720).